Reading from the N-terminus, the 99-residue chain is UPF0125 protein PM0166 (99 aa).

It belongs to the UPF0125 (RnfH) family.

The chain is UPF0125 protein PM0166 from Pasteurella multocida (strain Pm70).